We begin with the raw amino-acid sequence, 281 residues long: Nucleotide-binding protein DNO_0399 (281 aa).

Glycine 6–serine 13 contributes to the ATP binding site. Aspartate 55–asparagine 58 is a GTP binding site.

It belongs to the RapZ-like family.

In terms of biological role, displays ATPase and GTPase activities. The protein is Nucleotide-binding protein DNO_0399 of Dichelobacter nodosus (strain VCS1703A).